A 122-amino-acid chain; its full sequence is Large ribosomal subunit protein uL14 (122 aa).

Belongs to the universal ribosomal protein uL14 family. As to quaternary structure, part of the 50S ribosomal subunit. Forms a cluster with proteins L3 and L19. In the 70S ribosome, L14 and L19 interact and together make contacts with the 16S rRNA in bridges B5 and B8.

Binds to 23S rRNA. Forms part of two intersubunit bridges in the 70S ribosome. The polypeptide is Large ribosomal subunit protein uL14 (Clostridium tetani (strain Massachusetts / E88)).